A 232-amino-acid chain; its full sequence is Putative uridine kinase DAS2 (232 aa).

Gly-17–Gly-24 is an ATP binding site.

The protein belongs to the uridine kinase family.

Its subcellular location is the cytoplasm. The protein resides in the nucleus. The catalysed reaction is uridine + ATP = UMP + ADP + H(+). It carries out the reaction cytidine + ATP = CMP + ADP + H(+). It participates in pyrimidine metabolism; CTP biosynthesis via salvage pathway; CTP from cytidine: step 1/3. It functions in the pathway pyrimidine metabolism; UMP biosynthesis via salvage pathway; UMP from uridine: step 1/1. Putative uridine kinase identified in a screen for mutants with increased levels of rDNA transcription. The sequence is that of Putative uridine kinase DAS2 (DAS2) from Saccharomyces cerevisiae (strain ATCC 204508 / S288c) (Baker's yeast).